Consider the following 141-residue polypeptide: Hemoglobin subunit alpha-A (141 aa).

A Globin domain is found at 1–141; it reads VLSSGDKANV…VSTVLTSKYR (141 aa). O2 is bound at residue H58. H87 provides a ligand contact to heme b.

It belongs to the globin family. In terms of assembly, heterotetramer of two alpha chains and two beta chains. In terms of tissue distribution, red blood cells.

Involved in oxygen transport from the lung to the various peripheral tissues. This Caretta caretta (Loggerhead sea turtle) protein is Hemoglobin subunit alpha-A (HBAA).